A 383-amino-acid chain; its full sequence is ATP phosphoribosyltransferase regulatory subunit (383 aa).

Belongs to the class-II aminoacyl-tRNA synthetase family. HisZ subfamily. In terms of assembly, heteromultimer composed of HisG and HisZ subunits.

Its subcellular location is the cytoplasm. Its pathway is amino-acid biosynthesis; L-histidine biosynthesis; L-histidine from 5-phospho-alpha-D-ribose 1-diphosphate: step 1/9. In terms of biological role, required for the first step of histidine biosynthesis. May allow the feedback regulation of ATP phosphoribosyltransferase activity by histidine. The sequence is that of ATP phosphoribosyltransferase regulatory subunit from Cupriavidus metallidurans (strain ATCC 43123 / DSM 2839 / NBRC 102507 / CH34) (Ralstonia metallidurans).